The chain runs to 263 residues: Protein PYRICULARIA ORYZAE RESISTANCE 21 (263 aa).

The HMA domain occupies 1–68 (MGILVISVDL…IWCKAGKIIK (68 aa)). Residues Cys12 and Cys15 each contribute to the a metal cation site. Residues 126 to 153 (CEKPKPCEKPPPCKPEEPPKPPPEKPPP) are disordered. Residues 139-153 (KPEEPPKPPPEKPPP) show a composition bias toward basic and acidic residues.

Involved in defense responses. Contributes to slowing defense responses toward Magnaporthe oryzae. The chain is Protein PYRICULARIA ORYZAE RESISTANCE 21 from Oryza sativa subsp. indica (Rice).